The primary structure comprises 171 residues: MGDPRKPRKKWEGPKHPWIKERLERERELMGRYGLRNKKELWKAETLARRFRHRARSLLGLPPEVRREASRVLVESLYRMGLIDNPNVDIDEVLGINAEKVLERRLQTIVYKKGLAKTIYQARQLVVHGHIAIAGRRVTSPGYLVSREEEKLIDYAPGSPFKERAEEAAQA.

The 65-residue stretch at 104-168 (RRLQTIVYKK…SPFKERAEEA (65 aa)) folds into the S4 RNA-binding domain.

The protein belongs to the universal ribosomal protein uS4 family. Part of the 30S ribosomal subunit. Contacts protein S5. The interaction surface between S4 and S5 is involved in control of translational fidelity.

Its function is as follows. One of the primary rRNA binding proteins, it binds directly to 16S rRNA where it nucleates assembly of the body of the 30S subunit. With S5 and S12 plays an important role in translational accuracy. This chain is Small ribosomal subunit protein uS4, found in Aeropyrum pernix (strain ATCC 700893 / DSM 11879 / JCM 9820 / NBRC 100138 / K1).